We begin with the raw amino-acid sequence, 310 residues long: MASYASEVKKELTSIEVHPEHAKAELAAFLRMNAVLSRHDGQMSLDIVTENPAIARRIFSLIKTAYGFEPQLIVTRKMKLKKNHQYLVRVAQMVSEIMADLEIYSPKKGFITGVPDKIKYSEQRSMSYLRGGFLASGSVNNPETSRYHLEIYCTYANHSQDLQEIMNKYFDLNAKVTARRSGSIVYLKEAEKIGDFLHVVGAVNAMLAFEDLRIMRDMRNSVNRLVNCDTANLRKTAGAAAKQVEDIELIDQKQGLESLPEKLASLARFRLQHPELSLKELAEQVPDGPISKSGVNHRLKKLHEIAENLR.

A DNA-binding region (H-T-H motif) is located at residues 277 to 310; that stretch reads SLKELAEQVPDGPISKSGVNHRLKKLHEIAENLR.

Belongs to the WhiA family.

Functionally, involved in cell division and chromosome segregation. The chain is Probable cell division protein WhiA from Lactobacillus delbrueckii subsp. bulgaricus (strain ATCC BAA-365 / Lb-18).